We begin with the raw amino-acid sequence, 256 residues long: Pimeloyl-[acyl-carrier protein] methyl ester esterase (256 aa).

The region spanning 15–242 (HLVLLHGWGL…AAHAPFISHP (228 aa)) is the AB hydrolase-1 domain. Substrate contacts are provided by residues Trp-22, 82-83 (SL), and 143-147 (FLALQ). The active-site Nucleophile is Ser-82. Catalysis depends on residues Asp-207 and His-235. Residue His-235 coordinates substrate.

It belongs to the AB hydrolase superfamily. Carboxylesterase BioH family. As to quaternary structure, monomer.

Its subcellular location is the cytoplasm. It catalyses the reaction 6-carboxyhexanoyl-[ACP] methyl ester + H2O = 6-carboxyhexanoyl-[ACP] + methanol + H(+). Its pathway is cofactor biosynthesis; biotin biosynthesis. Its function is as follows. The physiological role of BioH is to remove the methyl group introduced by BioC when the pimeloyl moiety is complete. It allows to synthesize pimeloyl-ACP via the fatty acid synthetic pathway through the hydrolysis of the ester bonds of pimeloyl-ACP esters. The chain is Pimeloyl-[acyl-carrier protein] methyl ester esterase from Salmonella dublin (strain CT_02021853).